Reading from the N-terminus, the 541-residue chain is MVADPPKGDPKGLAAVEPTANGAPAQDPLEDSGAAVGRCCSSRDQVRRCLRANLLVLLTVVAVVAGVALGLAVSGAGGALALGPARLIAFAFPGELLLRLLKMIILPLVVCSLVGGAASLDPSALGRLGAWALLFFLVTTLLASALGVGLALALQPGAAFAAMNASLSSTGAVEQTPSKQVLDSFLDLLRNIFPSNLVSAAFRSYSTSYEEKNFNGTLVKVPVAHEEEGMNILGLVVFAIVFGVALRKLGPEGEPLIRFFNSFNDATMVLVSWIMWYAPVGILFLVASKIVEMDDVGVLFASLGKYILCCLLGHAIHGLLVLPLIYFLFTRKNPYRFLWGILTPLAMAFGTSSSSATLPLMMKCVEERNGVAKHISRFVLPIGATVNMDGAALFQCVAAVFIAQLNRQSLDFVKIITILVTATASSVGAAGIPAGGVLTLAIILEAVSLPVSEISLILAVDWLVDRSCTIINVEGDAFGAGLLQHYVDRTEQRGSEPELTQVKSEVPLGSLPAPNEEGNPLLRHSPGAAGDAGACEKESVM.

Position 1 is an N-acetylmethionine (Met-1). Over residues 1–10 (MVADPPKGDP) the composition is skewed to basic and acidic residues. The interval 1 to 32 (MVADPPKGDPKGLAAVEPTANGAPAQDPLEDS) is disordered. Topologically, residues 1–52 (MVADPPKGDPKGLAAVEPTANGAPAQDPLEDSGAAVGRCCSSRDQVRRCLRA) are cytoplasmic. The chain crosses the membrane as a helical span at residues 53-82 (NLLVLLTVVAVVAGVALGLAVSGAGGALAL). Residues 83 to 95 (GPARLIAFAFPGE) lie on the Extracellular side of the membrane. A helical transmembrane segment spans residues 96-117 (LLLRLLKMIILPLVVCSLVGGA). Residues 118-131 (ASLDPSALGRLGAW) lie on the Cytoplasmic side of the membrane. The helical transmembrane segment at 132–154 (ALLFFLVTTLLASALGVGLALAL) threads the bilayer. The Extracellular portion of the chain corresponds to 155 to 225 (QPGAAFAAMN…GTLVKVPVAH (71 aa)). N-linked (GlcNAc...) asparagine glycosylation is found at Asn-164 and Asn-215. Residues 226–249 (EEEGMNILGLVVFAIVFGVALRKL) form a helical membrane-spanning segment. Topologically, residues 250-258 (GPEGEPLIR) are cytoplasmic. The chain crosses the membrane as a helical span at residues 259–286 (FFNSFNDATMVLVSWIMWYAPVGILFLV). The Extracellular segment spans residues 287–307 (ASKIVEMDDVGVLFASLGKYI). Residues 308-329 (LCCLLGHAIHGLLVLPLIYFLF) form a helical membrane-spanning segment. At 330–334 (TRKNP) the chain is on the cytoplasmic side. Residues 335–365 (YRFLWGILTPLAMAFGTSSSSATLPLMMKCV) constitute an intramembrane region (discontinuously helical). The Cytoplasmic segment spans residues 366–374 (EERNGVAKH). The helical transmembrane segment at 375–401 (ISRFVLPIGATVNMDGAALFQCVAAVF) threads the bilayer. 3 residues coordinate Na(+): Gly-383, Thr-385, and Asn-387. Topologically, residues 402-414 (IAQLNRQSLDFVK) are extracellular. Positions 415-448 (IITILVTATASSVGAAGIPAGGVLTLAIILEAVS) form an intramembrane region, discontinuously helical. At 449-461 (LPVSEISLILAVD) the chain is on the extracellular side. The helical transmembrane segment at 462-483 (WLVDRSCTIINVEGDAFGAGLL) threads the bilayer. Na(+)-binding residues include Asn-472 and Asp-476. Topologically, residues 484–541 (QHYVDRTEQRGSEPELTQVKSEVPLGSLPAPNEEGNPLLRHSPGAAGDAGACEKESVM) are cytoplasmic. The disordered stretch occupies residues 493–541 (RGSEPELTQVKSEVPLGSLPAPNEEGNPLLRHSPGAAGDAGACEKESVM). Phosphoserine occurs at positions 495, 504, and 539.

Belongs to the dicarboxylate/amino acid:cation symporter (DAACS) (TC 2.A.23) family. SLC1A5 subfamily. As to quaternary structure, homotrimer.

It localises to the cell membrane. It is found in the melanosome. It carries out the reaction L-glutamine(out) + L-serine(in) + Na(+)(out) = L-glutamine(in) + L-serine(out) + Na(+)(in). The enzyme catalyses L-glutamine(in) + L-serine(out) + Na(+)(out) = L-glutamine(out) + L-serine(in) + Na(+)(in). The catalysed reaction is L-threonine(in) + L-glutamine(out) + Na(+)(out) = L-threonine(out) + L-glutamine(in) + Na(+)(in). It catalyses the reaction L-threonine(out) + L-glutamine(in) + Na(+)(out) = L-threonine(in) + L-glutamine(out) + Na(+)(in). It carries out the reaction L-asparagine(in) + L-glutamine(out) + Na(+)(out) = L-asparagine(out) + L-glutamine(in) + Na(+)(in). The enzyme catalyses L-asparagine(out) + L-glutamine(in) + Na(+)(out) = L-asparagine(in) + L-glutamine(out) + Na(+)(in). The catalysed reaction is L-glutamine(in) + L-alanine(out) + Na(+)(out) = L-glutamine(out) + L-alanine(in) + Na(+)(in). It catalyses the reaction L-valine(out) + L-glutamine(in) + Na(+)(out) = L-valine(in) + L-glutamine(out) + Na(+)(in). It carries out the reaction L-glutamine(in) + L-methionine(out) + Na(+)(out) = L-glutamine(out) + L-methionine(in) + Na(+)(in). The enzyme catalyses L-glutamine(in) + L-glutamate(out) + Na(+)(out) + H(+)(out) = L-glutamine(out) + L-glutamate(in) + Na(+)(in) + H(+)(in). The catalysed reaction is D-serine(in) + L-glutamine(out) + Na(+)(out) = D-serine(out) + L-glutamine(in) + Na(+)(in). It catalyses the reaction D-serine(in) + L-alanine(out) + Na(+)(out) = D-serine(out) + L-alanine(in) + Na(+)(in). It carries out the reaction nitrate(in) = nitrate(out). The enzyme catalyses iodide(out) = iodide(in). The catalysed reaction is thiocyanate(in) = thiocyanate(out). Its function is as follows. Sodium-coupled antiporter of neutral amino acids. In a tri-substrate transport cycle, exchanges neutral amino acids between the extracellular and intracellular compartments, coupled to the inward cotransport of at least one sodium ion. The preferred substrate is the essential amino acid L-glutamine, a precursor for biosynthesis of proteins, nucleotides and amine sugars as well as an alternative fuel for mitochondrial oxidative phosphorylation. Exchanges L-glutamine with other neutral amino acids such as L-serine, L-threonine and L-asparagine in a bidirectional way. Provides L-glutamine to proliferating stem and activated cells driving the metabolic switch toward cell differentiation. The transport cycle is usually pH-independent, with the exception of L-glutamate. Transports extracellular L-glutamate coupled to the cotransport of one proton and one sodium ion in exchange for intracellular L-glutamine counter-ion. May provide for L-glutamate uptake in glial cells regulating glutamine/glutamate cycle in the nervous system. Can transport D-amino acids. Mediates D-serine release from the retinal glia potentially affecting NMDA receptor function in retinal neurons. Displays sodium- and amino acid-dependent but uncoupled channel-like anion conductance with a preference SCN(-) &gt;&gt; NO3(-) &gt; I(-) &gt; Cl(-). Through binding of the fusogenic protein syncytin-1/ERVW-1 may mediate trophoblasts syncytialization, the spontaneous fusion of their plasma membranes, an essential process in placental development. The protein is Neutral amino acid transporter B(0) (SLC1A5) of Oryctolagus cuniculus (Rabbit).